A 251-amino-acid polypeptide reads, in one-letter code: 2,3-bisphosphoglycerate-dependent phosphoglycerate mutase (251 aa).

Substrate is bound by residues 11–18, 24–25, arginine 63, 90–93, lysine 101, 117–118, and 185–186; these read RHGNSDWN, TG, ERHY, RR, and GN. Histidine 12 serves as the catalytic Tele-phosphohistidine intermediate. Residue glutamate 90 is the Proton donor/acceptor of the active site. The segment at 117–142 is disordered; that stretch reads RRSFDVPPPPIDDDDEYSQSRDPRYA.

This sequence belongs to the phosphoglycerate mutase family. BPG-dependent PGAM subfamily.

It carries out the reaction (2R)-2-phosphoglycerate = (2R)-3-phosphoglycerate. It functions in the pathway carbohydrate degradation; glycolysis; pyruvate from D-glyceraldehyde 3-phosphate: step 3/5. Its function is as follows. Catalyzes the interconversion of 2-phosphoglycerate and 3-phosphoglycerate. This Clavibacter michiganensis subsp. michiganensis (strain NCPPB 382) protein is 2,3-bisphosphoglycerate-dependent phosphoglycerate mutase.